Here is a 166-residue protein sequence, read N- to C-terminus: Endoribonuclease YbeY (166 aa).

The Zn(2+) site is built by His132, His136, and His142.

It belongs to the endoribonuclease YbeY family. The cofactor is Zn(2+).

It localises to the cytoplasm. Single strand-specific metallo-endoribonuclease involved in late-stage 70S ribosome quality control and in maturation of the 3' terminus of the 16S rRNA. The protein is Endoribonuclease YbeY of Clostridium acetobutylicum (strain ATCC 824 / DSM 792 / JCM 1419 / IAM 19013 / LMG 5710 / NBRC 13948 / NRRL B-527 / VKM B-1787 / 2291 / W).